Reading from the N-terminus, the 549-residue chain is Cell pattern formation-associated protein StuA (549 aa).

The region spanning 86–192 (RVTATLWEDE…HNIGALLYHP (107 aa)) is the HTH APSES-type domain. The segment at residues 120–141 (GTKLLNVAGMTRGRRDGILKSE) is a DNA-binding region (H-T-H motif). Disordered stretches follow at residues 205 to 227 (AERR…LPSI), 246 to 288 (SLAN…DLHR), 332 to 466 (REED…DHLN), and 514 to 549 (ASTV…QSFG). Residues 246 to 266 (SLANGPQSLASTPQPLANGSQ) are compositionally biased toward polar residues. 3 stretches are compositionally biased toward basic and acidic residues: residues 278–288 (RGREEEEDLHR), 332–346 (REED…HNAH), and 385–395 (RGRDEDDDHRS). The interval 516 to 545 (TVAASPSYPSAPVYDTAARPPSAISAPRRQ) is nuclear localization domain. Residues 532 to 549 (AARPPSAISAPRRQQSFG) show a composition bias toward low complexity.

The protein belongs to the EFG1/PHD1/stuA family.

It is found in the nucleus. Transcription factor that regulates asexual reproduction. Binds the StuA-response elements (StRE) with the consensus sequence 5'-(A/T)CGCG(T/A)N(A/C)-3' at the promoters of target genes. The protein is Cell pattern formation-associated protein StuA of Gibberella moniliformis (strain M3125 / FGSC 7600) (Maize ear and stalk rot fungus).